Here is a 490-residue protein sequence, read N- to C-terminus: Myocilin (490 aa).

A signal peptide spans 1-18; it reads MPAVQLLLLAGLVWGAGA. Positions 55 to 170 form a coiled coil; that stretch reads SAIQDLQRDS…QEVARLARGQ (116 aa). The segment at 168–187 is disordered; it reads RGQCPQARDTSQDVPAGSRE. An Olfactomedin-like domain is found at 230 to 489; that stretch reads GCGELVWVGQ…MVTYDIKLSK (260 aa). An intrachain disulfide couples Cys231 to Cys419. Positions 366, 414, 415, 463, and 464 each coordinate Ca(2+). The Microbody targeting signal signature appears at 488–490; it reads SKI.

As to quaternary structure, homodimer (via N-terminus). Can also form higher oligomers. Interacts with OLFM3, FN1, NRCAM, GLDN and NFASC. Interacts (via N-terminus) with MYL2. Interacts with SFRP1, FRZB, FZD7, FZD10, FZD1 and WIF1; regulates Wnt signaling. Interacts with SNTA1; regulates muscle hypertrophy. Interacts with ERBB2 and ERBB3; activates ERBB2-ERBB3 signaling pathway. Interacts with SNCG; affects its secretion and its aggregation. Post-translationally, palmitoylated. Glycosylated. In terms of processing, undergoes a calcium-dependent proteolytic cleavage at Arg-212 by CAPN2 in the endoplasmic reticulum. The result is the production of two fragments, one of 35 kDa containing the C-terminal olfactomedin-like domain, and another of 20 kDa containing the N-terminal leucine zipper-like domain. In terms of tissue distribution, detected in eye aqueous humor (at protein level).

It is found in the secreted. Its subcellular location is the golgi apparatus. It localises to the cytoplasmic vesicle. The protein localises to the extracellular space. The protein resides in the extracellular matrix. It is found in the extracellular exosome. Its subcellular location is the mitochondrion. It localises to the mitochondrion intermembrane space. The protein localises to the mitochondrion inner membrane. The protein resides in the mitochondrion outer membrane. It is found in the rough endoplasmic reticulum. Its subcellular location is the cell projection. It localises to the cilium. The protein localises to the endoplasmic reticulum. Secreted glycoprotein regulating the activation of different signaling pathways in adjacent cells to control different processes including cell adhesion, cell-matrix adhesion, cytoskeleton organization and cell migration. Promotes substrate adhesion, spreading and formation of focal contacts. Negatively regulates cell-matrix adhesion and stress fiber assembly through Rho protein signal transduction. Modulates the organization of actin cytoskeleton by stimulating the formation of stress fibers through interactions with components of Wnt signaling pathways. Promotes cell migration through activation of PTK2 and the downstream phosphatidylinositol 3-kinase signaling. Plays a role in bone formation and promotes osteoblast differentiation in a dose-dependent manner through mitogen-activated protein kinase signaling. Mediates myelination in the peripheral nervous system through ERBB2/ERBB3 signaling. Plays a role as a regulator of muscle hypertrophy through the components of dystrophin-associated protein complex. Involved in positive regulation of mitochondrial depolarization. Plays a role in neurite outgrowth. May participate in the obstruction of fluid outflow in the trabecular meshwork. The chain is Myocilin from Oryctolagus cuniculus (Rabbit).